We begin with the raw amino-acid sequence, 397 residues long: Argininosuccinate synthase (397 aa).

Ala-9 to Ser-17 is an ATP binding site. Position 86 (Tyr-86) interacts with L-citrulline. Residue Gly-116 coordinates ATP. Thr-118, Asn-122, and Asp-123 together coordinate L-aspartate. An L-citrulline-binding site is contributed by Asn-122. L-citrulline is bound by residues Arg-126, Ser-174, Glu-259, and Tyr-271.

The protein belongs to the argininosuccinate synthase family. Type 1 subfamily. Homotetramer.

The protein resides in the cytoplasm. The enzyme catalyses L-citrulline + L-aspartate + ATP = 2-(N(omega)-L-arginino)succinate + AMP + diphosphate + H(+). The protein operates within amino-acid biosynthesis; L-arginine biosynthesis; L-arginine from L-ornithine and carbamoyl phosphate: step 2/3. The polypeptide is Argininosuccinate synthase (Lactococcus lactis subsp. cremoris (strain SK11)).